A 148-amino-acid chain; its full sequence is Transcriptional regulator MraZ (148 aa).

SpoVT-AbrB domains follow at residues 7–56 and 85–128; these read KERH…EPDI and LDVV…APER.

Belongs to the MraZ family. As to quaternary structure, forms oligomers.

It localises to the cytoplasm. The protein resides in the nucleoid. The polypeptide is Transcriptional regulator MraZ (Chlorobium phaeobacteroides (strain DSM 266 / SMG 266 / 2430)).